The chain runs to 835 residues: Leucine--tRNA ligase (835 aa).

The 'HIGH' region signature appears at 42–52; sequence PYPSGRIHMGH. The 'KMSKS' region motif lies at 612–616; it reads KMSKS. Lysine 615 lines the ATP pocket.

The protein belongs to the class-I aminoacyl-tRNA synthetase family.

It localises to the cytoplasm. It carries out the reaction tRNA(Leu) + L-leucine + ATP = L-leucyl-tRNA(Leu) + AMP + diphosphate. The chain is Leucine--tRNA ligase from Rhizorhabdus wittichii (strain DSM 6014 / CCUG 31198 / JCM 15750 / NBRC 105917 / EY 4224 / RW1) (Sphingomonas wittichii).